We begin with the raw amino-acid sequence, 121 residues long: Large ribosomal subunit protein bL19 (121 aa).

It belongs to the bacterial ribosomal protein bL19 family.

Its function is as follows. This protein is located at the 30S-50S ribosomal subunit interface and may play a role in the structure and function of the aminoacyl-tRNA binding site. This chain is Large ribosomal subunit protein bL19, found in Chlamydia trachomatis serovar L2 (strain ATCC VR-902B / DSM 19102 / 434/Bu).